The primary structure comprises 184 residues: ATP synthase subunit b, chloroplastic (184 aa).

A helical membrane pass occupies residues 27–49; the sequence is LATNPINLSVVLGVLIFFGKGVL.

Belongs to the ATPase B chain family. As to quaternary structure, F-type ATPases have 2 components, F(1) - the catalytic core - and F(0) - the membrane proton channel. F(1) has five subunits: alpha(3), beta(3), gamma(1), delta(1), epsilon(1). F(0) has four main subunits: a(1), b(1), b'(1) and c(10-14). The alpha and beta chains form an alternating ring which encloses part of the gamma chain. F(1) is attached to F(0) by a central stalk formed by the gamma and epsilon chains, while a peripheral stalk is formed by the delta, b and b' chains.

It localises to the plastid. The protein localises to the chloroplast thylakoid membrane. Its function is as follows. F(1)F(0) ATP synthase produces ATP from ADP in the presence of a proton or sodium gradient. F-type ATPases consist of two structural domains, F(1) containing the extramembraneous catalytic core and F(0) containing the membrane proton channel, linked together by a central stalk and a peripheral stalk. During catalysis, ATP synthesis in the catalytic domain of F(1) is coupled via a rotary mechanism of the central stalk subunits to proton translocation. Component of the F(0) channel, it forms part of the peripheral stalk, linking F(1) to F(0). This is ATP synthase subunit b, chloroplastic from Cucumis sativus (Cucumber).